The primary structure comprises 245 residues: Probable phosphatase Ent638_1550 (245 aa).

Zn(2+)-binding residues include H7, H9, H15, H40, E73, H101, H131, D192, and H194.

Belongs to the PHP family. Homotrimer. It depends on Zn(2+) as a cofactor.

The chain is Probable phosphatase Ent638_1550 from Enterobacter sp. (strain 638).